The sequence spans 105 residues: UPF0145 protein HD_1349 (105 aa).

Belongs to the UPF0145 family.

The protein is UPF0145 protein HD_1349 of Haemophilus ducreyi (strain 35000HP / ATCC 700724).